A 292-amino-acid chain; its full sequence is 33 kDa chaperonin (292 aa).

Disulfide bonds link Cys236-Cys238 and Cys269-Cys272.

It belongs to the HSP33 family. Post-translationally, under oxidizing conditions two disulfide bonds are formed involving the reactive cysteines. Under reducing conditions zinc is bound to the reactive cysteines and the protein is inactive.

It localises to the cytoplasm. Its function is as follows. Redox regulated molecular chaperone. Protects both thermally unfolding and oxidatively damaged proteins from irreversible aggregation. Plays an important role in the bacterial defense system toward oxidative stress. The protein is 33 kDa chaperonin of Ruminiclostridium cellulolyticum (strain ATCC 35319 / DSM 5812 / JCM 6584 / H10) (Clostridium cellulolyticum).